Reading from the N-terminus, the 265-residue chain is Hydroxyethylthiazole kinase (265 aa).

Methionine 43 is a substrate binding site. ATP contacts are provided by arginine 119 and serine 165. Alanine 192 is a binding site for substrate.

The protein belongs to the Thz kinase family. Requires Mg(2+) as cofactor.

It carries out the reaction 5-(2-hydroxyethyl)-4-methylthiazole + ATP = 4-methyl-5-(2-phosphooxyethyl)-thiazole + ADP + H(+). Its pathway is cofactor biosynthesis; thiamine diphosphate biosynthesis; 4-methyl-5-(2-phosphoethyl)-thiazole from 5-(2-hydroxyethyl)-4-methylthiazole: step 1/1. Catalyzes the phosphorylation of the hydroxyl group of 4-methyl-5-beta-hydroxyethylthiazole (THZ). The sequence is that of Hydroxyethylthiazole kinase from Haemophilus influenzae (strain ATCC 51907 / DSM 11121 / KW20 / Rd).